A 1058-amino-acid chain; its full sequence is MPKRTDIQKIMVIGSGPIIIGQAAEFDYAGTQACLSLKEEGYEVVLVNSNPATIMTDKEIADKVYIEPITLEFVTRILRKERPDALLPTLGGQTGLNMAMELSKNGILDELGVELLGTRLSAIDQAEDRDLFKQLMEELEQPIPESEIVNTVEEAIAFAATIGYPVIVRPAFTLGGTGGGMCANEKELREITENGLKLSPVTQCLIERSIAGFKEIEYEVMRDSADNALVVCNMENFDPVGIHTGDSIVFAPAQTMSDYENQMLRDASLSIIRALKIEGGCNVQLALDPNSFKYYVIEVNPRVSRSSALASKATGYPIAKLAAKIAVGLTLDEVINPVTGSTYAMFEPALDYVVAKIPRFPFDKFEKGERRLGTQMKATGEVMAIGRNIEESLLKACRSLEIGVHHNEIPELAAVSDDTLIEKVVKAQDDRLFYVSEAIRRGYTPEEIAELTKIDIFYLDKLLHIFEIEQELGAHPQDLEVLKIAKLNGFSDRKIAELWGTTDDQVRQLRLENKIVPVYKMVDTCAAEFDSETPYFYSTYGWENESIRSDKESVLVLGSGPIRIGQGVEFDYATVHSVKAIQAAGYEAIIMNSNPETVSTDFSVSDKLYFEPLTFEDVMNVIDLEQPKGVIVQFGGQTAINLAEPLAKAGVTILGTQVADLDRAEDRDLFEQALKELDIPQPPGQTATNEEEAALAARKIGFPVLVRPSYVLGGRAMEIVENEEDLRSYMRTAVKASPDHPVLVDSYIVGQECEVDAISDGKNVLIPGIMEHIERAGVHSGDSMAVYPPQTLSQKVQETIADYTKRLAIGLHCLGMMNIQFVIKDEKVYVIEVNPRASRTVPFLSKVTNIPMAQVATKLILGQSLSELGYQNGLYPESTRVHIKAPVFSFTKLAKVDSLLGPEMKSTGEVMGSDATLEKALYKAFEASYLHLPTFGNVVFTIADDAKEEALNLARRFQNIGYGILATEGTAAFFASHGLQAQPVGKIGDDDKDIPSFVRKGRIQAIINTVGTKRTADEDGEQIRRSAIEHGVPLFTALDTANAMLKVLESRSFVTEAI.

The carboxyphosphate synthetic domain stretch occupies residues 1–401 (MPKRTDIQKI…SLLKACRSLE (401 aa)). Residues arginine 129, arginine 169, glycine 175, glycine 176, arginine 208, isoleucine 210, glutamate 215, glycine 241, isoleucine 242, histidine 243, glutamine 284, and glutamate 298 each coordinate ATP. Positions 133 to 327 (KQLMEELEQP…IAKLAAKIAV (195 aa)) constitute an ATP-grasp 1 domain. Positions 284, 298, and 300 each coordinate Mg(2+). Residues glutamine 284, glutamate 298, and asparagine 300 each coordinate Mn(2+). The segment at 402–546 (IGVHHNEIPE…YSTYGWENES (145 aa)) is oligomerization domain. The segment at 547-929 (IRSDKESVLV…ALYKAFEASY (383 aa)) is carbamoyl phosphate synthetic domain. Residues 671–861 (EQALKELDIP…MAQVATKLIL (191 aa)) enclose the ATP-grasp 2 domain. The ATP site is built by arginine 707, serine 746, isoleucine 748, glutamate 752, glycine 777, valine 778, histidine 779, serine 780, glutamine 820, and glutamate 832. Mg(2+)-binding residues include glutamine 820, glutamate 832, and asparagine 834. Residues glutamine 820, glutamate 832, and asparagine 834 each coordinate Mn(2+). The MGS-like domain maps to 930–1058 (LHLPTFGNVV…ESRSFVTEAI (129 aa)). Residues 930 to 1058 (LHLPTFGNVV…ESRSFVTEAI (129 aa)) form an allosteric domain region.

Belongs to the CarB family. In terms of assembly, composed of two chains; the small (or glutamine) chain promotes the hydrolysis of glutamine to ammonia, which is used by the large (or ammonia) chain to synthesize carbamoyl phosphate. Tetramer of heterodimers (alpha,beta)4. Mg(2+) serves as cofactor. Mn(2+) is required as a cofactor.

It catalyses the reaction hydrogencarbonate + L-glutamine + 2 ATP + H2O = carbamoyl phosphate + L-glutamate + 2 ADP + phosphate + 2 H(+). The enzyme catalyses hydrogencarbonate + NH4(+) + 2 ATP = carbamoyl phosphate + 2 ADP + phosphate + 2 H(+). The protein operates within amino-acid biosynthesis; L-arginine biosynthesis; carbamoyl phosphate from bicarbonate: step 1/1. Its pathway is pyrimidine metabolism; UMP biosynthesis via de novo pathway; (S)-dihydroorotate from bicarbonate: step 1/3. Large subunit of the glutamine-dependent carbamoyl phosphate synthetase (CPSase). CPSase catalyzes the formation of carbamoyl phosphate from the ammonia moiety of glutamine, carbonate, and phosphate donated by ATP, constituting the first step of 2 biosynthetic pathways, one leading to arginine and/or urea and the other to pyrimidine nucleotides. The large subunit (synthetase) binds the substrates ammonia (free or transferred from glutamine from the small subunit), hydrogencarbonate and ATP and carries out an ATP-coupled ligase reaction, activating hydrogencarbonate by forming carboxy phosphate which reacts with ammonia to form carbamoyl phosphate. The polypeptide is Carbamoyl phosphate synthase large chain (Streptococcus pneumoniae serotype 19F (strain G54)).